Here is a 366-residue protein sequence, read N- to C-terminus: ATP-dependent 6-phosphofructokinase 2 (366 aa).

ATP contacts are provided by residues Gly15, 78–79 (KD), and 119–122 (GDGT). Asp120 is a binding site for Mg(2+). Substrate-binding positions include 142-144 (TID), Arg179, 186-188 (MGR), Glu239, Arg284, and 290-293 (HIQR). Asp144 functions as the Proton acceptor in the catalytic mechanism.

Belongs to the phosphofructokinase type A (PFKA) family. Mixed-substrate PFK group III subfamily. In terms of assembly, homodimer or homotetramer. Mg(2+) is required as a cofactor.

The protein resides in the cytoplasm. The catalysed reaction is beta-D-fructose 6-phosphate + ATP = beta-D-fructose 1,6-bisphosphate + ADP + H(+). It functions in the pathway carbohydrate degradation; glycolysis; D-glyceraldehyde 3-phosphate and glycerone phosphate from D-glucose: step 3/4. Its activity is regulated as follows. Subject to allosteric activation by ADP and other diphosphonucleosides, and inhibition by phosphoenolpyruvate. In terms of biological role, catalyzes the phosphorylation of D-fructose 6-phosphate to fructose 1,6-bisphosphate by ATP, the first committing step of glycolysis. In Clostridium perfringens (strain 13 / Type A), this protein is ATP-dependent 6-phosphofructokinase 2.